The sequence spans 491 residues: Synaptotagmin-9 (491 aa).

The Vesicular segment spans residues 1–52 (MPGARDALCHQALQLLAELCARGALEHDSCQDFIYHLRDRARPRLRDPDISV). Positions 9–31 (CHQALQLLAELCARGALEHDSCQ) are cysteine motif. Residues 53 to 73 (SLLTLVVTACGLALFGVSLFV) form a helical membrane-spanning segment. Over 74 to 491 (SWKLCWVPWR…AHWHSLLEKR (418 aa)) the chain is Cytoplasmic. Residues 91–104 (SKDNNQEPLNYTDT) are compositionally biased toward polar residues. The interval 91–147 (SKDNNQEPLNYTDTETNEQENSEDFLDPPTPCPDSSMKISHTSPDIPLSTQPGGQDN) is disordered. Residues 105 to 116 (ETNEQENSEDFL) are compositionally biased toward acidic residues. The span at 127 to 144 (MKISHTSPDIPLSTQPGG) shows a compositional bias: polar residues. The residue at position 177 (Ser-177) is a Phosphoserine. 2 C2 domains span residues 220-341 (ACGK…ILWK) and 352-485 (DLGE…AHWH). Ca(2+)-binding residues include Asp-251, Asp-257, Asp-309, Phe-310, Asp-311, Ser-314, Asp-317, Asp-383, Asp-389, Asp-443, and Asp-445.

It belongs to the synaptotagmin family. Homodimer; disulfide-linked via the cysteine motif. Can also form heterodimers with SYT3, SYT6, SYT7 and SYT10. Ca(2+) is required as a cofactor.

The protein resides in the cytoplasmic vesicle. Its subcellular location is the secretory vesicle. It is found in the synaptic vesicle membrane. In terms of biological role, may be involved in Ca(2+)-dependent exocytosis of secretory vesicles through Ca(2+) and phospholipid binding to the C2 domain or may serve as Ca(2+) sensors in the process of vesicular trafficking and exocytosis. The protein is Synaptotagmin-9 (Syt9) of Rattus norvegicus (Rat).